The primary structure comprises 146 residues: Hemoglobin subunit beta (146 aa).

Positions 2–146 (HWTAEEKQLI…VAHALARKYH (145 aa)) constitute a Globin domain. H63 and H92 together coordinate heme b.

This sequence belongs to the globin family. Heterotetramer of two alpha chains and two beta chains. As to expression, red blood cells.

Its function is as follows. Involved in oxygen transport from the lung to the various peripheral tissues. In Anas platyrhynchos platyrhynchos (Northern mallard), this protein is Hemoglobin subunit beta (HBB).